Here is a 157-residue protein sequence, read N- to C-terminus: Phospholipase A2 phaiodactylipin (157 aa).

Trp-34 and Gly-36 together coordinate Ca(2+). 5 disulfides stabilise this stretch: Cys-35–Cys-56, Cys-55–Cys-94, Cys-62–Cys-87, Cys-85–Cys-127, and Cys-132–Cys-143. Residue Asn-43 is glycosylated (N-linked (GlcNAc...) asparagine). The active site involves His-59. A Ca(2+)-binding site is contributed by Asp-60. The active site involves Asp-88. N-linked (GlcNAc...) asparagine glycosylation is present at Asn-101. The propeptide at 134-139 (DEKSAR) is removed in mature form. Asn-153 carries an N-linked (GlcNAc...) asparagine glycan.

The protein belongs to the phospholipase A2 family. Group III subfamily. Heterodimer composed of a small subunit and a large subunit; disulfide-linked. Ca(2+) is required as a cofactor. As to expression, expressed by the venom gland.

It is found in the secreted. It carries out the reaction a 1,2-diacyl-sn-glycero-3-phosphocholine + H2O = a 1-acyl-sn-glycero-3-phosphocholine + a fatty acid + H(+). Its function is as follows. Scorpion venom phospholipase A2 (PLA2) that is lethal to crickets and crustaceae. Causes inflammation in mice and lysis of human erythrocytes. Has a mild anticoagulant effect on human platelets. PLA2 catalyzes the calcium-dependent hydrolysis of the 2-acyl groups in 3-sn-phosphoglycerides. In Anuroctonus phaiodactylus (Mafia scorpion), this protein is Phospholipase A2 phaiodactylipin.